A 378-amino-acid polypeptide reads, in one-letter code: 7-methylxanthine methyltransferase 1 (378 aa).

Y18, C61, N66, D100, L101, S139, F140, and C156 together coordinate S-adenosyl-L-homocysteine. Positions 157, 160, and 161 each coordinate theobromine. Residues N178, D260, F262, and N263 each coordinate Mg(2+). Y362 serves as a coordination point for theobromine.

Belongs to the methyltransferase superfamily. Type-7 methyltransferase family. Mg(2+) is required as a cofactor. As to expression, mainly expressed, at low levels, in leaves and fruits (grains). Also present, at lower levels, in roots, stamens and pistils.

It is found in the cytoplasm. It carries out the reaction 7-methylxanthine + S-adenosyl-L-methionine = theobromine + S-adenosyl-L-homocysteine + H(+). It functions in the pathway alkaloid biosynthesis. Functionally, involved in the biosynthesis of caffeine. Catalyzes the conversion of 7-methylxanthine (7mX) to theobromine and of paraxanthine to caffeine. The protein is 7-methylxanthine methyltransferase 1 of Coffea canephora (Robusta coffee).